The sequence spans 1101 residues: ATP-citrate synthase (1101 aa).

An ATP-grasp domain is found at 4-265; sequence KAISEQTGKE…LDAKSGASLK (262 aa). ATP is bound by residues lysine 58, arginine 66, glycine 67, proline 109, valine 111, and glutamate 118. Tyrosine 131 is modified (phosphotyrosine). Position 216 (aspartate 216) interacts with ATP. Mg(2+) contacts are provided by aspartate 257, serine 260, and alanine 262. At serine 263 the chain carries Phosphoserine. 5 residues coordinate citrate: glycine 309, asparagine 346, threonine 348, tyrosine 364, and arginine 379. The span at 441 to 457 shows a compositional bias: low complexity; that stretch reads ASGSTSTPAPSRTASFS. The disordered stretch occupies residues 441–487; that stretch reads ASGSTSTPAPSRTASFSESRADEVAPAKKAKPAMPQDSVPSPRSLQG. Threonine 447 bears the Phosphothreonine mark. A Phosphoserine modification is found at serine 451. Position 455 is a phosphoserine; by PKA and PKB/AKT1 or PKB/AKT2 or BCKDK (serine 455). Phosphoserine is present on residues serine 459 and serine 481. A compositionally biased stretch (polar residues) spans 478–487; the sequence is SVPSPRSLQG. N6-acetyllysine; alternate occurs at positions 540, 546, and 554. Glycyl lysine isopeptide (Lys-Gly) (interchain with G-Cter in ubiquitin); alternate cross-links involve residues lysine 540, lysine 546, and lysine 554. Threonine 639 is subject to Phosphothreonine. Serine 663 carries the phosphoserine modification. At tyrosine 682 the chain carries Phosphotyrosine. The Tele-phosphohistidine intermediate role is filled by histidine 760. Residue 779–789 coordinates CoA; sequence LKEAGVFVPRS. Position 839 is a phosphoserine (serine 839). N6-acetyllysine occurs at positions 948, 968, 978, and 1077. Serine 1100 is subject to Phosphoserine.

It in the N-terminal section; belongs to the succinate/malate CoA ligase beta subunit family. In the C-terminal section; belongs to the succinate/malate CoA ligase alpha subunit family. As to quaternary structure, homotetramer. Mg(2+) is required as a cofactor. Phosphorylated by PKA and GSK3 in a sequential manner; phosphorylation results in activation of its activity. Phosphorylation on Thr-447 and Ser-451 depends on the phosphorylation state of Ser-455. Phosphorylation on Ser-455 is decreased by prior phosphorylation on the other 2 residues. Phosphorylated at Ser-455 by BCKDK and dephosphorylated by protein phosphatase PPM1K. In terms of processing, ISGylated. Post-translationally, acetylated at Lys-540, Lys-546 and Lys-554 by KAT2B/PCAF. Acetylation is promoted by glucose and stabilizes the protein, probably by preventing ubiquitination at the same sites. Acetylation promotes de novo lipid synthesis. Deacetylated by SIRT2. Ubiquitinated at Lys-540, Lys-546 and Lys-554 by the BCR(KLHL25) E3 ubiquitin ligase complex and UBR4, leading to its degradation. Ubiquitination is probably inhibited by acetylation at same site. BCR(KLHL25)-mediated degradation of ACLY promotes fatty acid oxidation and is required for differentiation of inducible regulatory T (iTreg) cells.

The protein resides in the cytoplasm. It is found in the cytosol. The enzyme catalyses oxaloacetate + acetyl-CoA + ADP + phosphate = citrate + ATP + CoA. Its activity is regulated as follows. Phosphorylation results in activation of its activity. Glucose 6-phosphate, fructose 6-phosphate, fructose 2,6-bisphosphate, ribulose 5-phosphate, and fructose 1,6-bisphosphate also act as activators. Catalyzes the cleavage of citrate into oxaloacetate and acetyl-CoA, the latter serving as common substrate in multiple biochemical reactions in protein, carbohydrate and lipid metabolism. This chain is ATP-citrate synthase (ACLY), found in Homo sapiens (Human).